The sequence spans 325 residues: UPF0285 protein Mbar_A0208 (325 aa).

It belongs to the UPF0285 family.

This is UPF0285 protein Mbar_A0208 from Methanosarcina barkeri (strain Fusaro / DSM 804).